The chain runs to 297 residues: UDP-N-acetylenolpyruvoylglucosamine reductase (297 aa).

In terms of domain architecture, FAD-binding PCMH-type spans 22-195 (RAGGTARYYA…LAGRFRLQRG (174 aa)). The active site involves R169. S223 serves as the catalytic Proton donor. E293 is a catalytic residue.

This sequence belongs to the MurB family. FAD serves as cofactor.

Its subcellular location is the cytoplasm. The catalysed reaction is UDP-N-acetyl-alpha-D-muramate + NADP(+) = UDP-N-acetyl-3-O-(1-carboxyvinyl)-alpha-D-glucosamine + NADPH + H(+). It participates in cell wall biogenesis; peptidoglycan biosynthesis. Functionally, cell wall formation. The polypeptide is UDP-N-acetylenolpyruvoylglucosamine reductase (Chloroflexus aurantiacus (strain ATCC 29364 / DSM 637 / Y-400-fl)).